The sequence spans 54 residues: Ferredoxin (54 aa).

4Fe-4S ferredoxin-type domains are found at residues 2–25 (YVIN…IQQG) and 26–54 (SIYA…NPED). 8 residues coordinate [4Fe-4S] cluster: Cys-8, Cys-11, Cys-14, Cys-18, Cys-35, Cys-38, Cys-41, and Cys-45.

[4Fe-4S] cluster serves as cofactor.

In terms of biological role, ferredoxins are iron-sulfur proteins that transfer electrons in a wide variety of metabolic reactions. In Peptoniphilus asaccharolyticus (Peptostreptococcus asaccharolyticus), this protein is Ferredoxin.